We begin with the raw amino-acid sequence, 896 residues long: Desmocollin-3 (896 aa).

The signal sequence occupies residues 1 to 27 (MAAAGPRRSVRGAVCLHLLLTLVIFSR). A propeptide spanning residues 28–135 (AGEACKKVIL…RETVLRRAKR (108 aa)) is cleaved from the precursor. Cadherin domains follow at residues 136-243 (RWAP…HPVF), 244-355 (TEAI…APTF), 356-471 (RQNA…GPEC), 472-579 (TPAA…EILQ), and 580-690 (EYVV…ILGK). The Extracellular segment spans residues 136–690 (RWAPIPCSMQ…SRSTGVILGK (555 aa)). Residue Asn-166 is glycosylated (N-linked (GlcNAc...) asparagine). 3 N-linked (GlcNAc...) asparagine glycosylation sites follow: Asn-392, Asn-546, and Asn-629. Residues 691–711 (WAILAILLGIALLFSVLLTLV) traverse the membrane as a helical segment. Residues 712–896 (CGVFGATKGK…ITLAEACTKR (185 aa)) lie on the Cytoplasmic side of the membrane.

In terms of assembly, may form homodimers. Interacts with DSG1; there is evidence to suggest that the interaction promotes cell-cell adhesion of keratinocytes. Expressed throughout the basal and spinous layer of the epidermis with weak expression in the granular layer (at protein level). Also expressed in the buccal mucosa, esophagus and cervix (at protein level).

The protein localises to the cell membrane. It is found in the cell junction. It localises to the desmosome. The protein resides in the cytoplasm. A component of desmosome cell-cell junctions which are required for positive regulation of cellular adhesion. Required for cell-cell adhesion in the epidermis, as a result required for the maintenance of the dermal cohesion and the dermal barrier function. Required for cell-cell adhesion of epithelial cell layers surrounding the telogen hair club, as a result plays an important role in telogen hair shaft anchorage. Essential for successful completion of embryo compaction and embryo development. The sequence is that of Desmocollin-3 (DSC3) from Homo sapiens (Human).